Here is a 433-residue protein sequence, read N- to C-terminus: UDP-N-acetylglucosamine 1-carboxyvinyltransferase (433 aa).

34 to 35 (KN) contributes to the phosphoenolpyruvate binding site. Position 104 (Arg-104) interacts with UDP-N-acetyl-alpha-D-glucosamine. Cys-128 (proton donor) is an active-site residue. Cys-128 bears the 2-(S-cysteinyl)pyruvic acid O-phosphothioketal mark. Residues Asp-320 and Ile-342 each contribute to the UDP-N-acetyl-alpha-D-glucosamine site.

This sequence belongs to the EPSP synthase family. MurA subfamily.

The protein localises to the cytoplasm. The catalysed reaction is phosphoenolpyruvate + UDP-N-acetyl-alpha-D-glucosamine = UDP-N-acetyl-3-O-(1-carboxyvinyl)-alpha-D-glucosamine + phosphate. It functions in the pathway cell wall biogenesis; peptidoglycan biosynthesis. In terms of biological role, cell wall formation. Adds enolpyruvyl to UDP-N-acetylglucosamine. The polypeptide is UDP-N-acetylglucosamine 1-carboxyvinyltransferase (Parasynechococcus marenigrum (strain WH8102)).